The following is a 722-amino-acid chain: ORC ubiquitin ligase 1 (722 aa).

The RING-type; degenerate zinc-finger motif lies at 18 to 56 (CHICLGKVRQPVVCTNNHVFCSICIDLWLKNNSQCPACR). Coiled-coil stretches lie at residues 87 to 129 (LRKT…TILD) and 157 to 267 (VVEW…KEDV). Position 210 is a phosphoserine (Ser-210). The segment at 273–359 (RAPSADSKGP…RLGARETPMD (87 aa)) is disordered. The span at 302–319 (AGSASASHLASPSSSRLA) shows a compositional bias: low complexity. The span at 323 to 338 (SVRQESTSRTEPNCPQ) shows a compositional bias: polar residues. Over residues 339 to 359 (NKDRYPKPTEPRLGARETPMD) the composition is skewed to basic and acidic residues. Phosphoserine occurs at positions 522, 549, 557, 564, and 566. A compositionally biased stretch (polar residues) spans 541 to 555 (MSESDNSKSPCNNGF). Disordered regions lie at residues 541–585 (MSES…GSKL) and 691–722 (VPEK…ATKS). Residues 571 to 581 (EFLEEPDKLQE) show a composition bias toward basic and acidic residues. Positions 698–722 (NGNQSTKRKIQSSLANASPSKATKS) are enriched in polar residues. 2 positions are modified to phosphoserine: Ser-715 and Ser-717.

Associates with ORC complex. Binds to chromatin; association is cell cycle-regulated, absent from mitotic chromosomes, is associated with chromatin from G1 and partially released from chromatin from mid S-phase. Post-translationally, auto-ubiquitinated.

The protein localises to the chromosome. It carries out the reaction S-ubiquitinyl-[E2 ubiquitin-conjugating enzyme]-L-cysteine + [acceptor protein]-L-lysine = [E2 ubiquitin-conjugating enzyme]-L-cysteine + N(6)-ubiquitinyl-[acceptor protein]-L-lysine.. Its function is as follows. E3 ubiquitin ligase essential for DNA replication origin activation during S phase. Acts as a replication origin selector which selects the origins to be fired and catalyzes the multi-mono-ubiquitination of a subset of chromatin-bound ORC3 and ORC5 during S-phase. The sequence is that of ORC ubiquitin ligase 1 from Mus musculus (Mouse).